The primary structure comprises 532 residues: CTP synthase (532 aa).

The tract at residues 1-265 is amidoligase domain; sequence MKYIVVTGGV…DEYLMRKLNL (265 aa). CTP is bound at residue S12. S12 serves as a coordination point for UTP. ATP-binding positions include 13–18 and D70; that span reads GLGKGI. Residues D70 and E140 each contribute to the Mg(2+) site. CTP-binding positions include 147–149, 186–191, and K222; these read DIE and KTKPTQ. Residues 186–191 and K222 each bind UTP; that span reads KTKPTQ. The 241-residue stretch at 289 to 529 folds into the Glutamine amidotransferase type-1 domain; that stretch reads SIAIVGKYVD…VRAALKYRRE (241 aa). L-glutamine is bound at residue G349. C376 (nucleophile; for glutamine hydrolysis) is an active-site residue. L-glutamine contacts are provided by residues 377 to 380, E400, and R457; that span reads FGFQ. Active-site residues include H502 and E504.

Belongs to the CTP synthase family. Homotetramer.

It catalyses the reaction UTP + L-glutamine + ATP + H2O = CTP + L-glutamate + ADP + phosphate + 2 H(+). The enzyme catalyses L-glutamine + H2O = L-glutamate + NH4(+). The catalysed reaction is UTP + NH4(+) + ATP = CTP + ADP + phosphate + 2 H(+). It participates in pyrimidine metabolism; CTP biosynthesis via de novo pathway; CTP from UDP: step 2/2. Its activity is regulated as follows. Allosterically activated by GTP, when glutamine is the substrate; GTP has no effect on the reaction when ammonia is the substrate. The allosteric effector GTP functions by stabilizing the protein conformation that binds the tetrahedral intermediate(s) formed during glutamine hydrolysis. Inhibited by the product CTP, via allosteric rather than competitive inhibition. Its function is as follows. Catalyzes the ATP-dependent amination of UTP to CTP with either L-glutamine or ammonia as the source of nitrogen. Regulates intracellular CTP levels through interactions with the four ribonucleotide triphosphates. The sequence is that of CTP synthase from Archaeoglobus fulgidus (strain ATCC 49558 / DSM 4304 / JCM 9628 / NBRC 100126 / VC-16).